The chain runs to 275 residues: Putative Ig-like V-type domain-containing protein FPV055 (275 aa).

Ig-like V-type domains are found at residues 25 to 122 and 140 to 239; these read KTFV…MNLG and PRRS…KSLS.

The sequence is that of Putative Ig-like V-type domain-containing protein FPV055 from Fowlpox virus (strain NVSL) (FPV).